The following is a 290-amino-acid chain: MGLVMWLRTGVLMAILTGLLMGIGYLFGGPNVAFIMFLFSMFFNFITYWYSDRIVLSWYNARIVDEYEAPELYAIVRDLAQRAGLPTPRVAIIPSETPNAFATGRDPKHAVVAVTQGLLRILNRDELEGVIGHELTHIKNRDILIGTVAAAMAGAIMQLAYWARWIAIFGGFNRDRDDGGDIIGAILVAILAPIAAMLIQAAISRSREFLADEGGARISGKPHALASALMKIEQAVNYRPMREGNPATAHMFIVNPFRGMSIANLFSTHPPTEARIERLRKIAEEMGIYF.

The next 2 helical transmembrane spans lie at 5–27 (MWLR…GYLF) and 32–51 (VAFI…YWYS). His-133 is a binding site for Zn(2+). Glu-134 is an active-site residue. A Zn(2+)-binding site is contributed by His-137. 2 consecutive transmembrane segments (helical) span residues 143–163 (ILIG…AYWA) and 182–202 (IIGA…IQAA). Glu-208 lines the Zn(2+) pocket.

Belongs to the peptidase M48B family. Requires Zn(2+) as cofactor.

Its subcellular location is the cell membrane. The protein is Protease HtpX homolog of Thermococcus kodakarensis (strain ATCC BAA-918 / JCM 12380 / KOD1) (Pyrococcus kodakaraensis (strain KOD1)).